We begin with the raw amino-acid sequence, 430 residues long: Tapasin (430 aa).

An N-terminal signal peptide occupies residues 1 to 15; it reads MAAGLRLLLAGLCWS. At 16 to 399 the chain is on the lumenal side; sequence QFRVEDAASP…TEGPHLEDIT (384 aa). An intrachain disulfide couples C34 to C99. The disordered stretch occupies residues 61–128; that stretch reads GDAETPPEPG…PDARSPPTAG (68 aa). N-linked (GlcNAc...) asparagine glycosylation is present at N78. Positions 101–111 are enriched in polar residues; the sequence is LNPTNPQTGSD. Ig-like C1-type domains are found at residues 139-273 and 278-382; these read PQYG…LQLH and PKVT…MRVS. Residues C299 and C368 are joined by a disulfide bond. Residues 316–342 form a disordered region; it reads RAGGSGTSQSPRDTVMDSWTSGHRQAA. Positions 322-338 are enriched in polar residues; it reads TSQSPRDTVMDSWTSGH. A helical membrane pass occupies residues 400–417; the sequence is GLFLVAFVLCGLIRWLYP. Topologically, residues 418-430 are cytoplasmic; sequence KAARPKEETKKSQ.

As to quaternary structure, interacts with TAP1 and is thus a subunit of the TAP complex. Interaction with TAP1 is TAP2 independent and is required for efficient peptide-TAP interaction. Obligatory mediator for the interaction between newly assembled MHC class I molecules, calreticulin, ERp57 and TAP. Up to 4 MHC class I/tapasin complexes bind to 1 TAP.

The protein resides in the endoplasmic reticulum membrane. In terms of biological role, involved in the association of MHC class I with transporter associated with antigen processing (TAP) and in the assembly of MHC class I with peptide (peptide loading). In Gallus gallus (Chicken), this protein is Tapasin (TAPBP).